Consider the following 331-residue polypeptide: uncharacterized protein (331 aa).

Belongs to the proline racemase family.

This is an uncharacterized protein from Bacillus anthracis.